The chain runs to 192 residues: 21.7 kDa class VI heat shock protein (192 aa).

Positions 80-192 constitute a sHSP domain; it reads SLRSLGQCRV…IPKINSKNKF (113 aa).

It belongs to the small heat shock protein (HSP20) family. As to quaternary structure, may form oligomeric structures.

Its subcellular location is the cytoplasm. The protein is 21.7 kDa class VI heat shock protein (HSP21.7) of Arabidopsis thaliana (Mouse-ear cress).